A 114-amino-acid chain; its full sequence is Ferredoxin (114 aa).

Residues Cys-9 and Cys-17 each coordinate [3Fe-4S] cluster. Cys-21, Cys-40, Cys-43, and Cys-46 together coordinate [4Fe-4S] cluster. The 4Fe-4S ferredoxin-type domain occupies 31-60 (RMLYINPDECVDCGACKPACRVEAIYWEGD). Cys-50 contacts [3Fe-4S] cluster.

It depends on [4Fe-4S] cluster as a cofactor. The cofactor is [3Fe-4S] cluster.

Its function is as follows. Ferredoxins are iron-sulfur proteins that transfer electrons in a wide variety of metabolic reactions. The polypeptide is Ferredoxin (fdxA) (Mycobacterium tuberculosis (strain ATCC 25618 / H37Rv)).